We begin with the raw amino-acid sequence, 467 residues long: SVGFKAGVKEYKLTYYTPEYETKDTDILAAFRVSPQPGVPPEEAGAAVAAESSTGTWTTVWTDGLTNLDRYKGRCYHIDPVLGEEDQYIAYVAYPLDLFEEGSVTNMFTSIVGNVFGFKALRALRLEDLRIPTAYVKTFQGPPHGIQVERDKLNKYGRPLLGCTIKPKLGLSAKNYGRAVYECLRGGLDFTKDDENVNSQPFMRWRDRLLFCAEAIFKSQAETGEIKGHYLNATAGNCEEMMKRAVFARELGVPIVMHDYLTGGFTANTTLASYCRDNGLLLHIHRAMHAVIDRQKNHGIHFRVLAKALRMSGGDHIHSGTVVGKLEGERNITLSFVVLLRDDYIEKDRSRGIFFTQDWVSLPGVLPVASGGIHVWHMPALVEIFGDDSVLQFGGGTLGHPWGNAPGAVANRVSLEACVQARNEGRDLAREGNDIIREACKWSPELAAACEVWKEIKFEFTDMDTLD.

Lys-5 is subject to N6,N6,N6-trimethyllysine. Asn-114 and Thr-164 together coordinate substrate. Catalysis depends on Lys-166, which acts as the Proton acceptor. Lys-168 contacts substrate. Mg(2+)-binding residues include Lys-192, Asp-194, and Glu-195. Lys-192 bears the N6-carboxylysine mark. Catalysis depends on His-285, which acts as the Proton acceptor. Positions 286, 318, and 370 each coordinate substrate.

Belongs to the RuBisCO large chain family. Type I subfamily. Heterohexadecamer of 8 large chains and 8 small chains; disulfide-linked. The disulfide link is formed within the large subunit homodimers. Requires Mg(2+) as cofactor. Post-translationally, the disulfide bond which can form in the large chain dimeric partners within the hexadecamer appears to be associated with oxidative stress and protein turnover.

The protein resides in the plastid. Its subcellular location is the chloroplast. The enzyme catalyses 2 (2R)-3-phosphoglycerate + 2 H(+) = D-ribulose 1,5-bisphosphate + CO2 + H2O. The catalysed reaction is D-ribulose 1,5-bisphosphate + O2 = 2-phosphoglycolate + (2R)-3-phosphoglycerate + 2 H(+). Its function is as follows. RuBisCO catalyzes two reactions: the carboxylation of D-ribulose 1,5-bisphosphate, the primary event in carbon dioxide fixation, as well as the oxidative fragmentation of the pentose substrate in the photorespiration process. Both reactions occur simultaneously and in competition at the same active site. The sequence is that of Ribulose bisphosphate carboxylase large chain from Hydrophyllum virginianum (Eastern waterleaf).